We begin with the raw amino-acid sequence, 465 residues long: Protein hedgehog (465 aa).

Cys-79 carries N-palmitoyl cysteine lipidation. Positions 143, 144, 149, 179, 180, 183, and 185 each coordinate Ca(2+). Gly-251 carries the Cholesterol glycine ester lipid modification.

It belongs to the hedgehog family. In terms of assembly, interacts with shf. In terms of processing, the C-terminal part of the hedgehog protein precursor displays an autoproteolysis activity that results in the cleavage of the full-length protein into two parts (N-product and C-product). In addition, the C-terminal part displays a cholesterol transferase activity that results by the covalent attachment of a cholesterol moiety to the C-terminal of the newly generated N-product. The N-product is the active species in both local and long-range signaling, whereas the C-product has no signaling activity. Post-translationally, cholesterylation is required for N-product targeting to lipid rafts and multimerization. N-palmitoylation by Rasp of the hedgehog N-product, within the secretory pathway, is required for the embryonic and larval patterning activities of the hedgehog signal.

Its subcellular location is the nucleus. The protein resides in the cytoplasm. It localises to the cell membrane. It carries out the reaction glycyl-L-cysteinyl-[protein] + cholesterol + H(+) = [protein]-C-terminal glycyl cholesterol ester + N-terminal L-cysteinyl-[protein]. The C-terminal part of the hedgehog protein precursor displays an autoproteolysis activity that results in the cleavage of the full-length protein into two parts (N-product and C-product). In addition, the C-terminal part displays a cholesterol transferase activity that results by the covalent attachment of a cholesterol moiety to the C-terminal of the newly generated N-product. Once cleaved, the C-product has no signaling activity and diffuses from the cell. Functionally, the dually lipidated hedgehog protein N-product is a morphogen which is essential for a variety of patterning events during development. Establishes the anterior-posterior axis of the embryonic segments and patterns the larval imaginal disks. Binds to the patched (ptc) receptor, which functions in association with smoothened (smo), to activate the transcription of target genes wingless (wg), decapentaplegic (dpp) and ptc. In the absence of hh, ptc represses the constitutive signaling activity of smo through fused (fu). Essential component of a signaling pathway which regulates the Duox-dependent gut immune response to bacterial uracil; required to activate Cad99C-dependent endosome formation, norpA-dependent Ca2+ mobilization and p38 MAPK, which are essential steps in the Duox-dependent production of reactive oxygen species (ROS) in response to intestinal bacterial infection. During photoreceptor differentiation, it up-regulates transcription of Ubr3, which in turn promotes the hh-signaling pathway by mediating the ubiquitination and degradation of cos. The polypeptide is Protein hedgehog (Drosophila sechellia (Fruit fly)).